The sequence spans 221 residues: Sugar transporter SWEET1 (221 aa).

The next 7 membrane-spanning stretches (helical) occupy residues Ala-3 to Phe-23, Gln-43 to Leu-63, Thr-68 to Leu-88, Ala-102 to Leu-122, Leu-129 to Ala-149, Leu-160 to Phe-180, and Tyr-186 to Cys-206. One can recognise a MtN3/slv 1 domain in the interval Phe-10–Lys-94. The 86-residue stretch at Gln-127–Gln-212 folds into the MtN3/slv 2 domain. A mediates interaction with TRPV2 region spans residues Ala-149–Thr-221.

It belongs to the SWEET sugar transporter family. As to quaternary structure, interacts with TRPV2; the interaction probably occurs intracellularly and depends on TRPV2 N-glycosylation. Expressed at high levels in lung, placenta, spleen and thymus, at intermediate levels in brain, heart, kidney and testis, and at low levels in bone marrow, liver and lymph node. Within the thymus expression is highest in non-lymphoid cells.

The protein resides in the golgi apparatus membrane. It localises to the cell membrane. Mediates sugar transport across membranes. May regulate the expression of RAG1 a gene involved in V(D)J recombination. The chain is Sugar transporter SWEET1 (Slc50a1) from Mus musculus (Mouse).